A 357-amino-acid polypeptide reads, in one-letter code: Glutamate 5-kinase (357 aa).

Position 7 (K7) interacts with ATP. Substrate-binding residues include S43, D130, and N142. 162–163 contributes to the ATP binding site; the sequence is TD. One can recognise a PUA domain in the interval 270–347; that stretch reads QGELTLDAGA…PAAGPSPVVV (78 aa).

It belongs to the glutamate 5-kinase family.

The protein resides in the cytoplasm. It catalyses the reaction L-glutamate + ATP = L-glutamyl 5-phosphate + ADP. It participates in amino-acid biosynthesis; L-proline biosynthesis; L-glutamate 5-semialdehyde from L-glutamate: step 1/2. Functionally, catalyzes the transfer of a phosphate group to glutamate to form L-glutamate 5-phosphate. The polypeptide is Glutamate 5-kinase (Parasynechococcus marenigrum (strain WH8102)).